The chain runs to 101 residues: Small ribosomal subunit protein uS14 (101 aa).

This sequence belongs to the universal ribosomal protein uS14 family. Part of the 30S ribosomal subunit. Contacts proteins S3 and S10.

Its function is as follows. Binds 16S rRNA, required for the assembly of 30S particles and may also be responsible for determining the conformation of the 16S rRNA at the A site. This Chlamydia abortus (strain DSM 27085 / S26/3) (Chlamydophila abortus) protein is Small ribosomal subunit protein uS14.